Reading from the N-terminus, the 187-residue chain is UPF0301 protein YqgE (187 aa).

It belongs to the UPF0301 (AlgH) family.

This is UPF0301 protein YqgE from Shigella boydii serotype 4 (strain Sb227).